The chain runs to 195 residues: Group XIIB secretory phospholipase A2-like protein (195 aa).

Positions Met1 to Ala19 are cleaved as a signal peptide. Ca(2+) is bound by residues Ser89, Tyr91, Leu93, and Asp116.

It belongs to the phospholipase A2 family. It depends on Ca(2+) as a cofactor.

It localises to the secreted. Its function is as follows. Not known; does not seem to have catalytic activity. The polypeptide is Group XIIB secretory phospholipase A2-like protein (Pla2g12b) (Mus musculus (Mouse)).